The following is a 230-amino-acid chain: Thymidylate kinase (230 aa).

23-30 is an ATP binding site; sequence GIDGAGKT.

This sequence belongs to the thymidylate kinase family.

It carries out the reaction dTMP + ATP = dTDP + ADP. Its function is as follows. Phosphorylation of dTMP to form dTDP in both de novo and salvage pathways of dTTP synthesis. In Ureaplasma parvum serovar 3 (strain ATCC 27815 / 27 / NCTC 11736), this protein is Thymidylate kinase.